The chain runs to 312 residues: MPIKIPADLPAYSVLSDEGVMVMSPDQAARQDIRPIKIGLLNLMPKKIQTENQFARLIGATPLQIEFSLIRMTEHQTKNTAAAHMEEFYRPFQEVRDEKFDGLIITGAPIEHLPFEDVTYWQELCEVFEWTQTNVHSTFGVCWGGMAMINYFHGVRKHMLDHKAFGCFRHQNLQPTSPYLRGFSDDFVIPVSRWTEMSQSEIDAAPGLTTLLGSADVGPCLVEDKAHRALYIFNHFEYDSDTLKQEYDRDVASGTEINVPINYYPDDDPSQRPLNRWRSHAHLLYGNWVSEIYQTTPYDVERIGLDTTDLRA.

Residue Cys-142 is the Acyl-thioester intermediate of the active site. Substrate is bound by residues Lys-163 and Ser-192. His-235 acts as the Proton acceptor in catalysis. The active site involves Glu-237. Arg-249 contacts substrate.

Belongs to the MetA family.

It localises to the cytoplasm. It carries out the reaction L-homoserine + acetyl-CoA = O-acetyl-L-homoserine + CoA. It participates in amino-acid biosynthesis; L-methionine biosynthesis via de novo pathway; O-acetyl-L-homoserine from L-homoserine: step 1/1. Its function is as follows. Transfers an acetyl group from acetyl-CoA to L-homoserine, forming acetyl-L-homoserine. This is Homoserine O-acetyltransferase from Ruegeria sp. (strain TM1040) (Silicibacter sp.).